A 982-amino-acid polypeptide reads, in one-letter code: ATP-dependent DNA helicase Q5 (982 aa).

The Helicase ATP-binding domain occupies 39 to 213 (MAVVKGAEDV…FAALHLKQPV (175 aa)). 52–59 (MPTGAGKS) provides a ligand contact to ATP. Residues 157–160 (DEAH) carry the DEAH box motif. One can recognise a Helicase C-terminal domain in the interval 241–398 (NLRDFCLKAL…NKPSDKATLL (158 aa)). The Zn(2+) site is built by C412, C428, C432, and C435. A phosphoserine mark is found at S489 and S492. Residues 491–621 (GSGDEGRDEA…ASKDGQLYDM (131 aa)) form an interaction with POLR2A region. T527 bears the Phosphothreonine mark. The interval 653 to 726 (PKRVGAGFSK…ALGSSVNCGD (74 aa)) is interaction with RAD51. Disordered stretches follow at residues 675–797 (GKSH…PGKC) and 812–893 (QTEG…AQEP). The residue at position 728 (S728) is a Phosphoserine; by CDK1.

Belongs to the helicase family. RecQ subfamily. In terms of assembly, monomer. Interacts with TOP2A, TOP3A and TOP3B. Interacts with RNA polymerase II subunit POLR2A. Identified in a complex with the RNA polymerase II core bound to DNA. Interacts with RAD51. Interacts with WRN; this interaction stimulates WRN helicase activity on DNA fork duplexes. Interacts with MUS1; this interaction promotes MUS81-dependent mitotic DNA synthesis. It depends on Zn(2+) as a cofactor. Post-translationally, phosphorylated by CDK1 at Ser-728; this phosphorylation is required for RECQL5-mediated disruption of RAD51 filaments on stalled replication forks.

Its subcellular location is the nucleus. The protein localises to the nucleoplasm. It carries out the reaction Couples ATP hydrolysis with the unwinding of duplex DNA by translocating in the 3'-5' direction.. The catalysed reaction is ATP + H2O = ADP + phosphate + H(+). Functionally, DNA helicase that plays an important role in DNA replication, transcription and repair. Binds to the RNA polymerase II subunit POLR2A during transcription elongation and suppresses transcription-associated genomic instability. Also associates with POLR1A and enforces the stability of ribosomal DNA arrays. Plays an important role in mitotic chromosome separation after cross-over events and cell cycle progress. Mechanistically, removes RAD51 filaments protecting stalled replication forks at common fragile sites and stimulates MUS81-EME1 endonuclease leading to mitotic DNA synthesis. Required for efficient DNA repair, including repair of inter-strand cross-links. Stimulates DNA decatenation mediated by TOP2A. Prevents sister chromatid exchange and homologous recombination. This is ATP-dependent DNA helicase Q5 (Recql5) from Mus musculus (Mouse).